A 533-amino-acid chain; its full sequence is Zona pellucida sperm-binding protein 3 receptor (533 aa).

An N-terminal signal peptide occupies residues 1-28 (MFPRLQAVSAPALLQITLMAVLLAPVLG). 7 Sushi domains span residues 29–88 (DCGP…FCAK), 89–150 (KRCR…ECVI), 151–215 (VKCD…TCEK), 216–275 (VICR…TCEP), 276–342 (NGCI…GCER), 343–408 (VCCP…ACES), and 409–467 (AVCL…KCEW). 14 disulfide bridges follow: C30–C74, C60–C86, C91–C132, C118–C148, C153–C196, C182–C213, C218–C260, C246–C273, C278–C328, C312–C340, C345–C393, C378–C406, C411–C452, and C438–C465. Residues N68 and N77 are each glycosylated (N-linked (GlcNAc...) asparagine). N185, N191, and N200 each carry an N-linked (GlcNAc...) asparagine glycan. Residues N433 and N455 are each glycosylated (N-linked (GlcNAc...) asparagine).

As to quaternary structure, homooligomer; disulfide-linked. May contain 6-8 monomers per oligomer. Post-translationally, the N-terminus may be blocked. As to expression, testis. Not expressed in heart, brain, liver or kidney.

The protein localises to the cytoplasmic vesicle. Its subcellular location is the secretory vesicle. It is found in the acrosome lumen. Its function is as follows. Probably involved in the formation of the dense core and M1 domain of the acrosome. May also regulate the release of certain secretory proteins following the acrosomal reaction. The protein is Zona pellucida sperm-binding protein 3 receptor (ZP3R) of Cavia porcellus (Guinea pig).